Reading from the N-terminus, the 473-residue chain is Lactate utilization protein B (473 aa).

4Fe-4S ferredoxin-type domains lie at 302–332 and 351–380; these read GSEF…GHSY and YDDY…LHDL. 7 residues coordinate [4Fe-4S] cluster: C311, C314, C317, C321, C364, C367, and C371.

It belongs to the LutB/YkgF family.

In terms of biological role, is involved in L-lactate degradation and allows cells to grow with lactate as the sole carbon source. Has probably a role as an electron transporter during oxidation of L-lactate. The sequence is that of Lactate utilization protein B from Bacillus cytotoxicus (strain DSM 22905 / CIP 110041 / 391-98 / NVH 391-98).